Reading from the N-terminus, the 181-residue chain is Oligoribonuclease (181 aa).

One can recognise an Exonuclease domain in the interval 8 to 171; that stretch reads LIWIDLEMTG…DDIRESIAEL (164 aa). Tyr129 is a catalytic residue.

Belongs to the oligoribonuclease family.

It localises to the cytoplasm. In terms of biological role, 3'-to-5' exoribonuclease specific for small oligoribonucleotides. This Alcanivorax borkumensis (strain ATCC 700651 / DSM 11573 / NCIMB 13689 / SK2) protein is Oligoribonuclease.